The chain runs to 370 residues: Putative agmatine deiminase (370 aa).

Residue C361 is the Amidino-cysteine intermediate of the active site.

The protein belongs to the agmatine deiminase family.

The catalysed reaction is agmatine + H2O = N-carbamoylputrescine + NH4(+). The sequence is that of Putative agmatine deiminase from Shewanella baltica (strain OS185).